The sequence spans 138 residues: Cysteine desulfuration protein SufE (138 aa).

Cysteine 51 (cysteine persulfide intermediate) is an active-site residue.

Belongs to the SufE family. Homodimer. Interacts with SufS.

It localises to the cytoplasm. The protein operates within cofactor biosynthesis; iron-sulfur cluster biosynthesis. Its function is as follows. Participates in cysteine desulfuration mediated by SufS. Cysteine desulfuration mobilizes sulfur from L-cysteine to yield L-alanine and constitutes an essential step in sulfur metabolism for biosynthesis of a variety of sulfur-containing biomolecules. Functions as a sulfur acceptor for SufS, by mediating the direct transfer of the sulfur atom from the S-sulfanylcysteine of SufS, an intermediate product of cysteine desulfuration process. In Salmonella dublin (strain CT_02021853), this protein is Cysteine desulfuration protein SufE.